The following is a 170-amino-acid chain: Peptide deformylase (170 aa).

Fe cation-binding residues include Cys-88 and His-130. Glu-131 is a catalytic residue. His-134 contacts Fe cation.

This sequence belongs to the polypeptide deformylase family. It depends on Fe(2+) as a cofactor.

It catalyses the reaction N-terminal N-formyl-L-methionyl-[peptide] + H2O = N-terminal L-methionyl-[peptide] + formate. Functionally, removes the formyl group from the N-terminal Met of newly synthesized proteins. Requires at least a dipeptide for an efficient rate of reaction. N-terminal L-methionine is a prerequisite for activity but the enzyme has broad specificity at other positions. The chain is Peptide deformylase from Acetivibrio thermocellus (strain ATCC 27405 / DSM 1237 / JCM 9322 / NBRC 103400 / NCIMB 10682 / NRRL B-4536 / VPI 7372) (Clostridium thermocellum).